A 142-amino-acid chain; its full sequence is Transcription antitermination protein NusB (142 aa).

This sequence belongs to the NusB family.

Involved in transcription antitermination. Required for transcription of ribosomal RNA (rRNA) genes. Binds specifically to the boxA antiterminator sequence of the ribosomal RNA (rrn) operons. The polypeptide is Transcription antitermination protein NusB (Borreliella burgdorferi (strain ATCC 35210 / DSM 4680 / CIP 102532 / B31) (Borrelia burgdorferi)).